Consider the following 347-residue polypeptide: NADH-ubiquinone oxidoreductase chain 2 (347 aa).

11 consecutive transmembrane segments (helical) span residues methionine 1–methionine 21, histidine 25–methionine 45, tyrosine 59–methionine 79, threonine 96–proline 116, leucine 123–tyrosine 143, isoleucine 153–threonine 173, isoleucine 178–proline 198, leucine 200–isoleucine 220, isoleucine 239–glycine 259, isoleucine 278–tyrosine 298, and phenylalanine 325–isoleucine 345.

Belongs to the complex I subunit 2 family. As to quaternary structure, core subunit of respiratory chain NADH dehydrogenase (Complex I) which is composed of 45 different subunits. Interacts with TMEM242.

It is found in the mitochondrion inner membrane. It catalyses the reaction a ubiquinone + NADH + 5 H(+)(in) = a ubiquinol + NAD(+) + 4 H(+)(out). In terms of biological role, core subunit of the mitochondrial membrane respiratory chain NADH dehydrogenase (Complex I) that is believed to belong to the minimal assembly required for catalysis. Complex I functions in the transfer of electrons from NADH to the respiratory chain. The immediate electron acceptor for the enzyme is believed to be ubiquinone. In Oryzorictes hova (Hova rice tenrec), this protein is NADH-ubiquinone oxidoreductase chain 2.